A 413-amino-acid chain; its full sequence is Serine/threonine transporter SstT (413 aa).

The next 10 membrane-spanning stretches (helical) occupy residues 18–38 (LSLV…ALFA), 52–72 (FVSA…MASI), 86–106 (ILFL…IASM), 119–139 (IAVS…LSVV), 145–165 (ALMN…GVAI), 196–216 (LGIF…ALIG), 221–241 (LAVL…LIVF), 292–312 (VSIP…ITVL), 320–340 (LGIA…AICA), and 360–380 (LFGI…IIGV).

It belongs to the dicarboxylate/amino acid:cation symporter (DAACS) (TC 2.A.23) family.

The protein resides in the cell inner membrane. The enzyme catalyses L-serine(in) + Na(+)(in) = L-serine(out) + Na(+)(out). It catalyses the reaction L-threonine(in) + Na(+)(in) = L-threonine(out) + Na(+)(out). Functionally, involved in the import of serine and threonine into the cell, with the concomitant import of sodium (symport system). The chain is Serine/threonine transporter SstT from Pseudomonas fluorescens (strain Pf0-1).